Here is a 189-residue protein sequence, read N- to C-terminus: dCTP deaminase (189 aa).

Residues 112 to 117 (KSTYAR), 136 to 138 (TLE), Gln-157, Tyr-171, and Gln-181 contribute to the dCTP site. Catalysis depends on Glu-138, which acts as the Proton donor/acceptor.

Belongs to the dCTP deaminase family. Homotrimer.

It catalyses the reaction dCTP + H2O + H(+) = dUTP + NH4(+). It functions in the pathway pyrimidine metabolism; dUMP biosynthesis; dUMP from dCTP (dUTP route): step 1/2. Functionally, catalyzes the deamination of dCTP to dUTP. This chain is dCTP deaminase, found in Nitrosospira multiformis (strain ATCC 25196 / NCIMB 11849 / C 71).